A 170-amino-acid chain; its full sequence is E1B protein, small T-antigen (170 aa).

The interval 137-170 (PAQPPHGLDPVREEEEEEEEEENLRAGLDPQTEL) is disordered. The segment covering 148–158 (REEEEEEEEEE) has biased composition (acidic residues).

The protein belongs to the adenoviridae E1B 19 kDa protein family.

The protein resides in the host cell membrane. Its subcellular location is the host nucleus envelope. It localises to the host nucleus lamina. In terms of biological role, putative adenovirus Bcl-2 homolog that inhibits apoptosis induced by TNF or FAS pathways, as well as p53-mediated apoptosis. Without E1B 19K function, virus production is compromised because of premature death of host cell. Interacts with Bax protein in cell lysates. The polypeptide is E1B protein, small T-antigen (Homo sapiens (Human)).